A 49-amino-acid polypeptide reads, in one-letter code: uncharacterized protein (49 aa).

This is an uncharacterized protein from Escherichia coli (Bacteriophage T4).